The chain runs to 464 residues: Argininosuccinate lyase (464 aa).

Position 2 is an N-acetylalanine (Ala2). Lys7 bears the N6-acetyllysine mark. Ser27 serves as a coordination point for 2-(N(omega)-L-arginino)succinate. Lys69 carries the N6-acetyllysine modification. The 2-(N(omega)-L-arginino)succinate site is built by Asn114 and Thr159. The active-site Proton acceptor is the His160. Ser281 serves as the catalytic Proton donor. Residue Lys288 is modified to N6-acetyllysine. 2-(N(omega)-L-arginino)succinate is bound by residues Asn289, Tyr321, Gln326, and Lys329.

It belongs to the lyase 1 family. Argininosuccinate lyase subfamily. Homotetramer. Forms tissue-specific complexes with ASS1, SLC7A1, HSP90AA1 and nitric oxide synthase NOS1, NOS2 or NOS3; the complex maintenance is independent of ASL catalytic function. In terms of processing, acetylation modifies enzyme activity in response to alterations of extracellular nutrient availability. Acetylation increased with trichostin A (TSA) or with nicotinamide (NAM). Glucose increases acetylation by about a factor of 3 with decreasing enzyme activity. Acetylation on Lys-288 is decreased on the addition of extra amino acids resulting in activation of enzyme activity.

The enzyme catalyses 2-(N(omega)-L-arginino)succinate = fumarate + L-arginine. It participates in amino-acid biosynthesis; L-arginine biosynthesis; L-arginine from L-ornithine and carbamoyl phosphate: step 3/3. The protein operates within nitrogen metabolism; urea cycle; L-arginine and fumarate from (N(omega)-L-arginino)succinate: step 1/1. Enzyme activity is regulated by acetylation. Its function is as follows. Catalyzes the reversible cleavage of L-argininosuccinate to fumarate and L-arginine, an intermediate step reaction in the urea cycle mostly providing for hepatic nitrogen detoxification into excretable urea as well as de novo L-arginine synthesis in nonhepatic tissues. Essential regulator of intracellular and extracellular L-arginine pools. As part of citrulline-nitric oxide cycle, forms tissue-specific multiprotein complexes with argininosuccinate synthase ASS1, transport protein SLC7A1 and nitric oxide synthase NOS1, NOS2 or NOS3, allowing for cell-autonomous L-arginine synthesis while channeling extracellular L-arginine to nitric oxide synthesis pathway. The protein is Argininosuccinate lyase (ASL) of Macaca fascicularis (Crab-eating macaque).